Consider the following 201-residue polypeptide: dITP/XTP pyrophosphatase (201 aa).

8 to 13 (SNNPGK) lines the substrate pocket. 2 residues coordinate Mg(2+): Glu-40 and Asp-69. The active-site Proton acceptor is Asp-69. Residues Ser-70, 155–158 (FGYD), Lys-178, and 183–184 (HR) contribute to the substrate site.

The protein belongs to the HAM1 NTPase family. Homodimer. The cofactor is Mg(2+).

The catalysed reaction is XTP + H2O = XMP + diphosphate + H(+). It catalyses the reaction dITP + H2O = dIMP + diphosphate + H(+). The enzyme catalyses ITP + H2O = IMP + diphosphate + H(+). Pyrophosphatase that catalyzes the hydrolysis of nucleoside triphosphates to their monophosphate derivatives, with a high preference for the non-canonical purine nucleotides XTP (xanthosine triphosphate), dITP (deoxyinosine triphosphate) and ITP. Seems to function as a house-cleaning enzyme that removes non-canonical purine nucleotides from the nucleotide pool, thus preventing their incorporation into DNA/RNA and avoiding chromosomal lesions. In Ralstonia nicotianae (strain ATCC BAA-1114 / GMI1000) (Ralstonia solanacearum), this protein is dITP/XTP pyrophosphatase.